Reading from the N-terminus, the 210-residue chain is 23 kDa jasmonate-induced protein (210 aa).

The protein belongs to the jasmonate-induced protein family.

This Hordeum vulgare (Barley) protein is 23 kDa jasmonate-induced protein.